The primary structure comprises 61 residues: Large ribosomal subunit protein eL29y (61 aa).

Residues 1 to 61 are disordered; sequence MAKSKNHTAH…KSGENAGVEE (61 aa). Basic residues predominate over residues 15–31; the sequence is KAHKNGIKKPRRHRHTP.

This sequence belongs to the eukaryotic ribosomal protein eL29 family.

This is Large ribosomal subunit protein eL29y (RPL29B) from Arabidopsis thaliana (Mouse-ear cress).